The chain runs to 255 residues: MRNSVQSDLKYINIINISETLYLFYSTGLDTLEYIDSTYKNFIIMYVNQHLLYGTTLKYLSVGEFFINSLTIFINGIRETMTSSTVIMYAIFGMFIFSEIMVFSTFIWGFFHFRLSNPVMIIEVNLEAFLQISDVLNAGSILISLILQRIEERGYFEVDYMLERLILIGFIFLSFQGDEYSLVKSYINNHWVTLYFNVLTGLHSLHVYVGGIFALMQAFASENCGCQKDEDFNAGMYWHFVEIIWIALTMLLFLL.

7 helical membrane passes run 12–29 (INII…STGL), 57–77 (LKYL…INGI), 91–111 (IFGM…WGFF), 126–146 (LEAF…ISLI), 155–175 (YFEV…FLSF), 196–216 (FNVL…FALM), and 235–255 (GMYW…LFLL).

It belongs to the cytochrome c oxidase subunit 3 family. Component of the cytochrome c oxidase (complex IV, CIV), a multisubunit enzyme composed of a catalytic core of 3 subunits and several supernumerary subunits. The complex exists as a monomer or a dimer and forms supercomplexes (SCs) in the inner mitochondrial membrane with ubiquinol-cytochrome c oxidoreductase (cytochrome b-c1 complex, complex III, CIII).

Its subcellular location is the mitochondrion inner membrane. The enzyme catalyses 4 Fe(II)-[cytochrome c] + O2 + 8 H(+)(in) = 4 Fe(III)-[cytochrome c] + 2 H2O + 4 H(+)(out). Its function is as follows. Component of the cytochrome c oxidase, the last enzyme in the mitochondrial electron transport chain which drives oxidative phosphorylation. The respiratory chain contains 3 multisubunit complexes succinate dehydrogenase (complex II, CII), ubiquinol-cytochrome c oxidoreductase (cytochrome b-c1 complex, complex III, CIII) and cytochrome c oxidase (complex IV, CIV), that cooperate to transfer electrons derived from NADH and succinate to molecular oxygen, creating an electrochemical gradient over the inner membrane that drives transmembrane transport and the ATP synthase. Cytochrome c oxidase is the component of the respiratory chain that catalyzes the reduction of oxygen to water. Electrons originating from reduced cytochrome c in the intermembrane space (IMS) are transferred via the dinuclear copper A center (CU(A)) of subunit 2 and heme A of subunit 1 to the active site in subunit 1, a binuclear center (BNC) formed by heme A3 and copper B (CU(B)). The BNC reduces molecular oxygen to 2 water molecules using 4 electrons from cytochrome c in the IMS and 4 protons from the mitochondrial matrix. This Theileria annulata protein is Cytochrome c oxidase subunit 3 (MT-CO3).